Consider the following 131-residue polypeptide: Small ribosomal subunit protein uS8 (131 aa).

This sequence belongs to the universal ribosomal protein uS8 family. Part of the 30S ribosomal subunit. Contacts proteins S5 and S12.

In terms of biological role, one of the primary rRNA binding proteins, it binds directly to 16S rRNA central domain where it helps coordinate assembly of the platform of the 30S subunit. The sequence is that of Small ribosomal subunit protein uS8 from Shewanella amazonensis (strain ATCC BAA-1098 / SB2B).